Consider the following 128-residue polypeptide: Large ribosomal subunit protein eL32 (128 aa).

Belongs to the eukaryotic ribosomal protein eL32 family.

The polypeptide is Large ribosomal subunit protein eL32 (rpl32e) (Thermoplasma volcanium (strain ATCC 51530 / DSM 4299 / JCM 9571 / NBRC 15438 / GSS1)).